The chain runs to 333 residues: Glycerol-3-phosphate dehydrogenase [NAD(P)+] (333 aa).

NADPH is bound by residues Ser13, Trp14, Arg34, and Lys108. 3 residues coordinate sn-glycerol 3-phosphate: Lys108, Gly137, and Ser139. Position 141 (Ala141) interacts with NADPH. Residues Lys192, Asp245, Ser255, Arg256, and Asn257 each contribute to the sn-glycerol 3-phosphate site. The active-site Proton acceptor is the Lys192. Arg256 is a binding site for NADPH. Glu282 contacts NADPH.

Belongs to the NAD-dependent glycerol-3-phosphate dehydrogenase family.

It localises to the cytoplasm. It catalyses the reaction sn-glycerol 3-phosphate + NAD(+) = dihydroxyacetone phosphate + NADH + H(+). It carries out the reaction sn-glycerol 3-phosphate + NADP(+) = dihydroxyacetone phosphate + NADPH + H(+). It participates in membrane lipid metabolism; glycerophospholipid metabolism. Catalyzes the reduction of the glycolytic intermediate dihydroxyacetone phosphate (DHAP) to sn-glycerol 3-phosphate (G3P), the key precursor for phospholipid synthesis. The chain is Glycerol-3-phosphate dehydrogenase [NAD(P)+] from Thioalkalivibrio sulfidiphilus (strain HL-EbGR7).